Consider the following 146-residue polypeptide: uncharacterized protein (146 aa).

This is an uncharacterized protein from Arabidopsis thaliana (Mouse-ear cress).